A 226-amino-acid chain; its full sequence is 2-C-methyl-D-erythritol 4-phosphate cytidylyltransferase (226 aa).

It belongs to the IspD/TarI cytidylyltransferase family. IspD subfamily.

The enzyme catalyses 2-C-methyl-D-erythritol 4-phosphate + CTP + H(+) = 4-CDP-2-C-methyl-D-erythritol + diphosphate. It functions in the pathway isoprenoid biosynthesis; isopentenyl diphosphate biosynthesis via DXP pathway; isopentenyl diphosphate from 1-deoxy-D-xylulose 5-phosphate: step 2/6. Functionally, catalyzes the formation of 4-diphosphocytidyl-2-C-methyl-D-erythritol from CTP and 2-C-methyl-D-erythritol 4-phosphate (MEP). The polypeptide is 2-C-methyl-D-erythritol 4-phosphate cytidylyltransferase (Thermosipho africanus (strain TCF52B)).